The sequence spans 156 residues: UPF0262 protein Jann_2882 (156 aa).

The protein belongs to the UPF0262 family.

The protein is UPF0262 protein Jann_2882 of Jannaschia sp. (strain CCS1).